The sequence spans 245 residues: Small ribosomal subunit protein uS2 (245 aa).

Residues glycine 226–alanine 245 form a disordered region.

It belongs to the universal ribosomal protein uS2 family.

This is Small ribosomal subunit protein uS2 from Erythrobacter litoralis (strain HTCC2594).